A 229-amino-acid polypeptide reads, in one-letter code: Large ribosomal subunit protein uL1 (229 aa).

The protein belongs to the universal ribosomal protein uL1 family. In terms of assembly, part of the 50S ribosomal subunit.

Its function is as follows. Binds directly to 23S rRNA. The L1 stalk is quite mobile in the ribosome, and is involved in E site tRNA release. Protein L1 is also a translational repressor protein, it controls the translation of the L11 operon by binding to its mRNA. The polypeptide is Large ribosomal subunit protein uL1 (Enterococcus faecalis (strain ATCC 700802 / V583)).